Consider the following 360-residue polypeptide: Peptide chain release factor 1 (360 aa).

At Gln235 the chain carries N5-methylglutamine. The interval Ala284–Pro313 is disordered.

It belongs to the prokaryotic/mitochondrial release factor family. Methylated by PrmC. Methylation increases the termination efficiency of RF1.

The protein localises to the cytoplasm. Peptide chain release factor 1 directs the termination of translation in response to the peptide chain termination codons UAG and UAA. This is Peptide chain release factor 1 from Salmonella gallinarum (strain 287/91 / NCTC 13346).